A 174-amino-acid polypeptide reads, in one-letter code: Co-chaperone protein HscB homolog (174 aa).

A J domain is found at asparagine 2 to leucine 74.

Belongs to the HscB family. Interacts with HscA and stimulates its ATPase activity.

Co-chaperone involved in the maturation of iron-sulfur cluster-containing proteins. Seems to help targeting proteins to be folded toward HscA. The polypeptide is Co-chaperone protein HscB homolog (Shewanella baltica (strain OS223)).